Here is a 614-residue protein sequence, read N- to C-terminus: ETS-related transcription factor Elf-1 (614 aa).

Residues Ser110, Ser163, Ser167, and Ser168 each carry the phosphoserine modification. The segment at 159–199 (TYAHSPGPSSPEQPKRKKGRKTKPPRPDSPTTTPNISVKKK) is disordered. A compositionally biased stretch (basic residues) spans 173-182 (KRKKGRKTKP). Ser187 carries the phosphoserine modification. Thr190 carries the phosphothreonine modification. Positions 208 to 290 (IYLWEFLLAL…EGQRLVYQFK (83 aa)) form a DNA-binding region, ETS. The interval 303–371 (DPSCSIESSD…VQPSEALRTV (69 aa)) is disordered. A compositionally biased stretch (low complexity) spans 310-335 (SSDPSLSSTATSSRNPASRSRASSSP). Phosphoserine is present on Ser430.

It belongs to the ETS family. In terms of assembly, binds to the underphosphorylated form of RB. May interact with other transcription factors in order to regulate specific genes. Interacts with RUNX1.

It localises to the nucleus. Its function is as follows. Transcription factor that activates the LYN and BLK promoters. This Bos taurus (Bovine) protein is ETS-related transcription factor Elf-1 (ELF1).